Here is a 303-residue protein sequence, read N- to C-terminus: UDP-3-O-acyl-N-acetylglucosamine deacetylase (303 aa).

Zn(2+)-binding residues include H78, H237, and D241. H264 functions as the Proton donor in the catalytic mechanism.

The protein belongs to the LpxC family. Zn(2+) is required as a cofactor.

The catalysed reaction is a UDP-3-O-[(3R)-3-hydroxyacyl]-N-acetyl-alpha-D-glucosamine + H2O = a UDP-3-O-[(3R)-3-hydroxyacyl]-alpha-D-glucosamine + acetate. It functions in the pathway glycolipid biosynthesis; lipid IV(A) biosynthesis; lipid IV(A) from (3R)-3-hydroxytetradecanoyl-[acyl-carrier-protein] and UDP-N-acetyl-alpha-D-glucosamine: step 2/6. Catalyzes the hydrolysis of UDP-3-O-myristoyl-N-acetylglucosamine to form UDP-3-O-myristoylglucosamine and acetate, the committed step in lipid A biosynthesis. The sequence is that of UDP-3-O-acyl-N-acetylglucosamine deacetylase from Pseudomonas fluorescens (strain SBW25).